Here is a 248-residue protein sequence, read N- to C-terminus: Probable transcriptional regulatory protein RHECIAT_CH0003714 (248 aa).

The protein belongs to the TACO1 family.

The protein resides in the cytoplasm. This is Probable transcriptional regulatory protein RHECIAT_CH0003714 from Rhizobium etli (strain CIAT 652).